A 149-amino-acid polypeptide reads, in one-letter code: MWIYLILMVALVIIDQVIKAAIVSHIALGASTSIVTGLLSLTNLHNNGAAWSILEGKMWFFYLISVIALIVMGYLLWRLRGKWLYEVGISLMIAGTLGNFIDRLRIGYVVDMFQLDFINFPIFNFADSCLTVGVIFILIGVLRDDSFEK.

A run of 3 helical transmembrane segments spans residues 24-44 (SHIALGASTSIVTGLLSLTNL), 57-77 (KMWFFYLISVIALIVMGYLLW), and 81-101 (GKWLYEVGISLMIAGTLGNFI). Catalysis depends on residues aspartate 111 and aspartate 127. A helical transmembrane segment spans residues 122 to 142 (IFNFADSCLTVGVIFILIGVL).

Belongs to the peptidase A8 family.

It is found in the cell membrane. The enzyme catalyses Release of signal peptides from bacterial membrane prolipoproteins. Hydrolyzes -Xaa-Yaa-Zaa-|-(S,diacylglyceryl)Cys-, in which Xaa is hydrophobic (preferably Leu), and Yaa (Ala or Ser) and Zaa (Gly or Ala) have small, neutral side chains.. It functions in the pathway protein modification; lipoprotein biosynthesis (signal peptide cleavage). This protein specifically catalyzes the removal of signal peptides from prolipoproteins. In Lactiplantibacillus plantarum (strain ATCC BAA-793 / NCIMB 8826 / WCFS1) (Lactobacillus plantarum), this protein is Lipoprotein signal peptidase.